Reading from the N-terminus, the 791-residue chain is FHF complex subunit HOOK-interacting protein 1B (791 aa).

Disordered stretches follow at residues 465 to 510 (APSP…VPRP) and 524 to 556 (SLGG…SPAE). Ser-467 is subject to Phosphoserine. Positions 496 to 510 (SPSVDSSSVVTVPRP) are enriched in low complexity. 5 positions are modified to phosphoserine: Ser-524, Ser-537, Ser-543, Ser-547, and Ser-679. The segment covering 541 to 552 (TASPTSSPGRRP) has biased composition (low complexity). Phosphothreonine is present on Thr-708. Ser-716 carries the post-translational modification Phosphoserine.

The protein belongs to the FHIP family. In terms of assembly, component of the FTS/Hook/FHIP complex (FHF complex), composed of AKTIP/FTS, FHIP1B, and one or more members of the Hook family of proteins HOOK1, HOOK2, and HOOK3. The FHF complex associates with the homotypic vesicular sorting complex (the HOPS complex).

In terms of biological role, component of the FTS/Hook/FHIP complex (FHF complex). The FHF complex may function to promote vesicle trafficking and/or fusion via the homotypic vesicular protein sorting complex (the HOPS complex). FHF complex promotes the distribution of AP-4 complex to the perinuclear area of the cell. The protein is FHF complex subunit HOOK-interacting protein 1B (Fhip1b) of Rattus norvegicus (Rat).